Consider the following 164-residue polypeptide: Putative glutamine amidotransferase-like protein RP713 (164 aa).

Residues 39–164 (TIANPNSLFM…VITVKIIIYM (126 aa)) form the Glutamine amidotransferase type-1 domain.

The sequence is that of Putative glutamine amidotransferase-like protein RP713 from Rickettsia prowazekii (strain Madrid E).